Reading from the N-terminus, the 576-residue chain is 60 kDa heat shock protein homolog 2, mitochondrial (576 aa).

Residues 1-61 (MMRMFRYTNT…AVTMGPKGRN (61 aa)) constitute a mitochondrion transit peptide.

The protein belongs to the chaperonin (HSP60) family. As to expression, first detectable expression is seen in the posterior part of the dorsal tracheal trunk at stage 14-15, which marks the beginning of terminal tracheation. In the larval gut, expression in proventriculus is stronger than in midgut and hindgut. Malpighian tubules shows low expression and late third instar larval imaginal disks and brain showed moderate expression. In larval ovary and testis, expression is strong in the posterior region.

It is found in the mitochondrion matrix. Functionally, prevents misfolding and promotes the refolding and proper assembly of unfolded polypeptides generated under stress conditions. Essential for proper development of trachea, spermatogonia and spermatocytes. The sequence is that of 60 kDa heat shock protein homolog 2, mitochondrial (Hsp60C) from Drosophila melanogaster (Fruit fly).